Consider the following 78-residue polypeptide: Large ribosomal subunit protein bL28 (78 aa).

The tract at residues 1–20 is disordered; sequence MSRVCQVTGKRPAVGNNRSH.

This sequence belongs to the bacterial ribosomal protein bL28 family.

The chain is Large ribosomal subunit protein bL28 from Actinobacillus pleuropneumoniae serotype 7 (strain AP76).